Reading from the N-terminus, the 201-residue chain is Holliday junction branch migration complex subunit RuvA (201 aa).

The interval 1-63 (MIGCLIGEVF…EDAQQLYGFI (63 aa)) is domain I. A domain II region spans residues 64-142 (DAQEKLIFRT…ALSVQATTGS (79 aa)). Positions 143-152 (TVTSAQIQFS) are flexible linker. A domain III region spans residues 152 to 201 (SSNSPIAEAEAALQSLGYKPIEAQKAIAAVKADYTEAADLIRAALKSMMK).

It belongs to the RuvA family. Homotetramer. Forms an RuvA(8)-RuvB(12)-Holliday junction (HJ) complex. HJ DNA is sandwiched between 2 RuvA tetramers; dsDNA enters through RuvA and exits via RuvB. An RuvB hexamer assembles on each DNA strand where it exits the tetramer. Each RuvB hexamer is contacted by two RuvA subunits (via domain III) on 2 adjacent RuvB subunits; this complex drives branch migration. In the full resolvosome a probable DNA-RuvA(4)-RuvB(12)-RuvC(2) complex forms which resolves the HJ.

Its subcellular location is the cytoplasm. The RuvA-RuvB-RuvC complex processes Holliday junction (HJ) DNA during genetic recombination and DNA repair, while the RuvA-RuvB complex plays an important role in the rescue of blocked DNA replication forks via replication fork reversal (RFR). RuvA specifically binds to HJ cruciform DNA, conferring on it an open structure. The RuvB hexamer acts as an ATP-dependent pump, pulling dsDNA into and through the RuvAB complex. HJ branch migration allows RuvC to scan DNA until it finds its consensus sequence, where it cleaves and resolves the cruciform DNA. This Acinetobacter baylyi (strain ATCC 33305 / BD413 / ADP1) protein is Holliday junction branch migration complex subunit RuvA.